Here is a 472-residue protein sequence, read N- to C-terminus: 23S rRNA (uracil(1939)-C(5))-methyltransferase RlmD (472 aa).

Over residues 1 to 15 (MSRTAPHRRAPKRYK) the composition is skewed to basic residues. The tract at residues 1–23 (MSRTAPHRRAPKRYKTPPPAPAH) is disordered. The 65-residue stretch at 23–87 (HVVTGNEPVI…PKFEQAEVVQ (65 aa)) folds into the TRAM domain. [4Fe-4S] cluster contacts are provided by cysteine 100, cysteine 106, cysteine 109, and cysteine 188. The S-adenosyl-L-methionine site is built by glutamine 296, phenylalanine 325, asparagine 330, glutamate 346, asparagine 374, and aspartate 395. Cysteine 428 (nucleophile) is an active-site residue.

This sequence belongs to the class I-like SAM-binding methyltransferase superfamily. RNA M5U methyltransferase family. RlmD subfamily.

It carries out the reaction uridine(1939) in 23S rRNA + S-adenosyl-L-methionine = 5-methyluridine(1939) in 23S rRNA + S-adenosyl-L-homocysteine + H(+). Functionally, catalyzes the formation of 5-methyl-uridine at position 1939 (m5U1939) in 23S rRNA. In Paraburkholderia xenovorans (strain LB400), this protein is 23S rRNA (uracil(1939)-C(5))-methyltransferase RlmD.